The primary structure comprises 161 residues: V-type proton ATPase 16 kDa proteolipid subunit c (161 aa).

The Lumenal portion of the chain corresponds to 1-15; that stretch reads MSYDLATAERAAYAP. A helical membrane pass occupies residues 16–36; sequence FFGYMGAASAQIFTVLGAAYG. Over 37-58 the chain is Cytoplasmic; it reads TAKSAVGISSMGVMRPELIMKS. The helical transmembrane segment at 59–79 threads the bilayer; that stretch reads VIPVIMAGIIGIYGLVVAMVL. Residues 80 to 98 lie on the Lumenal side of the membrane; the sequence is RGKVTSASAGYTLDKGFAH. Residues 99–119 form a helical membrane-spanning segment; the sequence is LAAGLTCGLCGLGAGYAIGIV. At 120 to 137 the chain is on the cytoplasmic side; it reads GDAGVRGTAQQPRLFVGM. A helical membrane pass occupies residues 138 to 158; it reads ILILIFSEVLGLYGMIVALIL. At 159-161 the chain is on the lumenal side; it reads GTS.

The protein belongs to the V-ATPase proteolipid subunit family. As to quaternary structure, V-ATPase is a heteromultimeric enzyme made up of two complexes: the ATP-hydrolytic V1 complex and the proton translocation V0 complex. The V1 complex consists of three catalytic AB heterodimers that form a heterohexamer, three peripheral stalks each consisting of EG heterodimers, one central rotor including subunits D and F, and the regulatory subunits C and H. The proton translocation complex V0 consists of the proton transport subunit a, a ring of proteolipid subunits c9c'', rotary subunit d, subunits e and f, and the accessory subunits vah-19/Ac45 and vah-20/PRR.

It localises to the membrane. Its function is as follows. Proton-conducting pore forming subunit of the V0 complex of vacuolar(H+)-ATPase (V-ATPase), a multisubunit enzyme composed of a peripheral complex (V1) that hydrolyzes ATP and a membrane integral complex (V0) that translocates protons. V-ATPase is responsible for acidifying and maintaining the pH of intracellular compartments and in some cell types, is targeted to the plasma membrane, where it is responsible for acidifying the extracellular environment. This chain is V-type proton ATPase 16 kDa proteolipid subunit c (12), found in Ascaris suum (Pig roundworm).